The chain runs to 483 residues: Cysteine--tRNA ligase (483 aa).

Cys-29 is a Zn(2+) binding site. Residues 31–41 carry the 'HIGH' region motif; that stretch reads ITVYDYCHLGH. Zn(2+)-binding residues include Cys-215, His-240, and Glu-244. The 'KMSKS' region motif lies at 272–276; the sequence is KMSKS. Lys-275 is a binding site for ATP.

It belongs to the class-I aminoacyl-tRNA synthetase family. As to quaternary structure, monomer. Zn(2+) is required as a cofactor.

It localises to the cytoplasm. It carries out the reaction tRNA(Cys) + L-cysteine + ATP = L-cysteinyl-tRNA(Cys) + AMP + diphosphate. In Synechocystis sp. (strain ATCC 27184 / PCC 6803 / Kazusa), this protein is Cysteine--tRNA ligase (cysS).